Consider the following 680-residue polypeptide: MSTNPLLDQSMLPYQAPRFDRIKDCHYRPAFDEGVRQKRVEIEAIVNHPAAPDFTNTLLALEQSGALLSRVTSVFFAMTAAHTNDELQRLDEAFSAELAALSNDIYLNSALFARVDAVWQQRHSLGLDDESLRLVDVIHQRFVLAGAQLAEEDKARLKVLNTESATLMSQFNQRLLAASKAGGLAVDDAHCLAGLSPEEMTVAAEAAREKGLEERWFIPLLNTTQQPALATLRDRQTRENLFAASWTRAEKGDAHDTRAIVQRLVEIRRCQAKLLGFPNYAAWKMADQMAKTPQAALSFMRGIVPPARQRVLNEQAEIQNVIDGEQGGYTVQAWDWMFYAEQVRREKYALDEAQLKPYFALNTVLQEGVFWTANQLFGITFVERFDIPVYHPDVRVWEIFDSDGVGMALFYGDFFARDSKSGGAWMGNFVEQSTLNETRPVIYNVCNYQKPVDGQPALLLWDDVITLFHEFGHTLHGLFAVQRYATLSGTNTPRDFVEFPSQINEHWASHPRVFERYARHVDSGEKMPADLQERMRKASLFNKGYDMTELLGAALLDMRWHMLEESVAEQSVAEFEQQALAAEHLDLPAVPPRYRSSYFAHIFGGGYAAGYYAYLWTQMLADDGYQWFVEQGGLTRENGQRFRDAILARGNSTDLETLYSAWRGHEPHIDPMLQYRGLDR.

His469 provides a ligand contact to Zn(2+). The active site involves Glu470. Zn(2+) is bound by residues His473 and His476.

It belongs to the peptidase M3 family. The cofactor is Zn(2+).

Its subcellular location is the cytoplasm. It catalyses the reaction Hydrolysis of unblocked, C-terminal dipeptides from oligopeptides, with broad specificity. Does not hydrolyze bonds in which P1' is Pro, or both P1 and P1' are Gly.. Its function is as follows. Removes dipeptides from the C-termini of N-blocked tripeptides, tetrapeptides and larger peptides. The polypeptide is Dipeptidyl carboxypeptidase (dcp) (Salmonella typhimurium (strain LT2 / SGSC1412 / ATCC 700720)).